Reading from the N-terminus, the 150-residue chain is Large ribosomal subunit protein bL9 (150 aa).

The protein belongs to the bacterial ribosomal protein bL9 family.

In terms of biological role, binds to the 23S rRNA. The chain is Large ribosomal subunit protein bL9 from Variovorax paradoxus (strain S110).